The sequence spans 281 residues: 2,3,4,5-tetrahydropyridine-2,6-dicarboxylate N-succinyltransferase (281 aa).

Residues arginine 108 and aspartate 145 each coordinate substrate.

The protein belongs to the transferase hexapeptide repeat family. Homotrimer.

The protein localises to the cytoplasm. It carries out the reaction (S)-2,3,4,5-tetrahydrodipicolinate + succinyl-CoA + H2O = (S)-2-succinylamino-6-oxoheptanedioate + CoA. Its pathway is amino-acid biosynthesis; L-lysine biosynthesis via DAP pathway; LL-2,6-diaminopimelate from (S)-tetrahydrodipicolinate (succinylase route): step 1/3. In Methylobacterium nodulans (strain LMG 21967 / CNCM I-2342 / ORS 2060), this protein is 2,3,4,5-tetrahydropyridine-2,6-dicarboxylate N-succinyltransferase.